The sequence spans 129 residues: Replication initiation control protein YabA (129 aa).

Zn(2+) is bound by residues histidine 103, cysteine 105, cysteine 119, and cysteine 122.

It belongs to the YabA family. As to quaternary structure, homotetramer. Interacts with both DnaA and DnaN, acting as a bridge between these two proteins. Zn(2+) serves as cofactor.

The protein resides in the cytoplasm. It is found in the nucleoid. Its function is as follows. Involved in control of chromosome replication initiation. Inhibits the cooperative binding of DnaA to the oriC region, thus negatively regulating initiation of chromosome replication. Inhibits the ability of DnaA-ATP to form a helix on DNA; does not disassemble preformed DnaA-DNA helices. Decreases the residence time of DnaA on the chromosome at its binding sites (oriC, replication forks and promoter-binding sites). Tethers DnaA to the replication machinery via the DNA polymerase beta sliding clamp subunit (dnaN). Associates with oriC and other DnaA targets on the chromosome in a DnaA-dependent manner. This Listeria innocua serovar 6a (strain ATCC BAA-680 / CLIP 11262) protein is Replication initiation control protein YabA.